A 157-amino-acid chain; its full sequence is Oocyte zinc finger protein XlCOF2 (157 aa).

C2H2-type zinc fingers lie at residues F6 to H28, Y34 to P56, F79 to H101, F107 to H129, and F135 to H157.

This sequence belongs to the krueppel C2H2-type zinc-finger protein family.

The protein resides in the nucleus. May be involved in transcriptional regulation. The chain is Oocyte zinc finger protein XlCOF2 from Xenopus laevis (African clawed frog).